The following is a 115-amino-acid chain: Parathyroid hormone (115 aa).

Residues 1–25 form the signal peptide; that stretch reads MMSAKDTVKVMVVMLAICFLARSDG. Residues 26–31 constitute a propeptide that is removed on maturation; sequence KPIKKR. The segment at 51-69 is important for receptor binding; sequence RVEWLRKKLQDVHNFVALG. The segment at 75–98 is disordered; the sequence is RDGGSQRPRKKEDNVLVESHQKSL.

Belongs to the parathyroid hormone family. As to quaternary structure, interacts with PTH1R (via N-terminal extracellular domain).

Its subcellular location is the secreted. In terms of biological role, parathyroid hormone elevates calcium level by dissolving the salts in bone and preventing their renal excretion. Acts by binding to its receptor, PTH1R, activating G protein-coupled receptor signaling. Stimulates [1-14C]-2-deoxy-D-glucose (2DG) transport and glycogen synthesis in osteoblastic cells. This chain is Parathyroid hormone (PTH), found in Sus scrofa (Pig).